The following is a 118-amino-acid chain: UPF0342 protein BC_0880 (118 aa).

The protein belongs to the UPF0342 family.

The sequence is that of UPF0342 protein BC_0880 from Bacillus cereus (strain ATCC 14579 / DSM 31 / CCUG 7414 / JCM 2152 / NBRC 15305 / NCIMB 9373 / NCTC 2599 / NRRL B-3711).